The sequence spans 241 residues: MTILFISDLHLSPLRPDITDCFIDFMQNEAIHAEKLYVLGDLFEFWIGDDDNSPFNVLVKNEFKALTKKGVKCYFIQGNRDFLLNKRFCKETGVELLDDHTVIDLDGEKVLIMHGDTLCIDDIKYQEFRAKVHKPWLQWVFNRIPLFIRQRIVKNVQDKIKEKKQTKTLCIMDVTQSEVERVMQEEGVQRLIHGHTHRPDTHTFISNDKEMTRIVLGDWYSQGSILEYSDKIYSLHKKEFK.

Positions 8, 10, 41, 79, and 114 each coordinate Mn(2+). 79–80 (NR) contacts substrate. D122, K164, K167, and H195 together coordinate substrate. Positions 195 and 197 each coordinate Mn(2+).

Belongs to the LpxH family. Requires Mn(2+) as cofactor.

It localises to the cell inner membrane. The catalysed reaction is UDP-2-N,3-O-bis[(3R)-3-hydroxytetradecanoyl]-alpha-D-glucosamine + H2O = 2-N,3-O-bis[(3R)-3-hydroxytetradecanoyl]-alpha-D-glucosaminyl 1-phosphate + UMP + 2 H(+). It participates in glycolipid biosynthesis; lipid IV(A) biosynthesis; lipid IV(A) from (3R)-3-hydroxytetradecanoyl-[acyl-carrier-protein] and UDP-N-acetyl-alpha-D-glucosamine: step 4/6. Hydrolyzes the pyrophosphate bond of UDP-2,3-diacylglucosamine to yield 2,3-diacylglucosamine 1-phosphate (lipid X) and UMP by catalyzing the attack of water at the alpha-P atom. Involved in the biosynthesis of lipid A, a phosphorylated glycolipid that anchors the lipopolysaccharide to the outer membrane of the cell. This chain is UDP-2,3-diacylglucosamine hydrolase, found in Aliivibrio fischeri (strain MJ11) (Vibrio fischeri).